A 356-amino-acid polypeptide reads, in one-letter code: Cysteine proteinase 3 (356 aa).

Positions 1–16 are cleaved as a signal peptide; that stretch reads MSRLSLVLILVAGLFA. A propeptide spans 17-138 (activation peptide); that stretch reads TALAGPATFA…KGNLKLTNVV (122 aa). Residue asparagine 123 is glycosylated (N-linked (GlcNAc...) asparagine). 2 disulfide bridges follow: cysteine 160–cysteine 203 and cysteine 194–cysteine 236. Residue cysteine 163 is part of the active site. N-linked (GlcNAc...) asparagine glycosylation occurs at asparagine 252. An intrachain disulfide couples cysteine 294 to cysteine 344. Residues histidine 303 and asparagine 323 contribute to the active site.

Belongs to the peptidase C1 family. Predominantly expressed in stem and root.

The protein resides in the vacuole. In Solanum lycopersicum (Tomato), this protein is Cysteine proteinase 3 (CYP-3).